Reading from the N-terminus, the 171-residue chain is T-cell surface glycoprotein CD3 delta chain (171 aa).

The N-terminal stretch at 1-21 (MEHSTFLSGLVLATLLSQVSP) is a signal peptide. The Extracellular segment spans residues 22–105 (FKIPVEELED…CVELDPATLA (84 aa)). A disulfide bridge links C37 with C73. N-linked (GlcNAc...) asparagine glycosylation is found at N38, N54, and N74. A helical membrane pass occupies residues 106–126 (GIIVTDVIATLLLALGVFCFA). Topologically, residues 127–171 (GHETGRLSGAADTQALLRNDQVYQPLRDRDDAQYSRLGGNWARNK) are cytoplasmic. An ITAM domain is found at 138 to 166 (DTQALLRNDQVYQPLRDRDDAQYSRLGGN). Y149 and Y160 each carry phosphotyrosine.

The TCR-CD3 complex is composed of a CD3D/CD3E and a CD3G/CD3E heterodimers that preferentially associate with TCRalpha and TCRbeta, respectively, to form TCRalpha/CD3E/CD3G and TCRbeta/CD3G/CD3E trimers. In turn, the hexamer interacts with CD3Z homodimer to form the TCR-CD3 complex. Alternatively, TCRalpha and TCRbeta can be replaced by TCRgamma and TCRdelta. Interacts with coreceptors CD4 and CD8. Post-translationally, phosphorylated on Tyr residues after T-cell receptor triggering by LCK in association with CD4/CD8. CD3D is mostly present on T-lymphocytes with its TCR-CD3 partners. Present also in fetal NK-cells.

The protein localises to the cell membrane. Part of the TCR-CD3 complex present on T-lymphocyte cell surface that plays an essential role in adaptive immune response. When antigen presenting cells (APCs) activate T-cell receptor (TCR), TCR-mediated signals are transmitted across the cell membrane by the CD3 chains CD3D, CD3E, CD3G and CD3Z. All CD3 chains contain immunoreceptor tyrosine-based activation motifs (ITAMs) in their cytoplasmic domain. Upon TCR engagement, these motifs become phosphorylated by Src family protein tyrosine kinases LCK and FYN, resulting in the activation of downstream signaling pathways. In addition of this role of signal transduction in T-cell activation, CD3D plays an essential role in thymocyte differentiation. Indeed, participates in correct intracellular TCR-CD3 complex assembly and surface expression. In absence of a functional TCR-CD3 complex, thymocytes are unable to differentiate properly. Interacts with CD4 and CD8 and thus serves to establish a functional link between the TCR and coreceptors CD4 and CD8, which is needed for activation and positive selection of CD4 or CD8 T-cells. This Macaca fascicularis (Crab-eating macaque) protein is T-cell surface glycoprotein CD3 delta chain (CD3D).